A 403-amino-acid chain; its full sequence is MVLITQLGAALAVFSALTVAAPTKGKARFSAPQVGIPKKAKHHPAAAYARALHKFGMKIPKAVSDAAKGSVPTTPTQNDEQYVTQVTVGGSTLNLDLDTGSADLWVFSTETPQDESQGHNIYKPSSGAKRLDGYSWEIKYGDSSSAHGDVFLDTVTVGGVTTSSQAVESAKEVSSQFVKDKATDGLMGLSFSVLNTVQPQPQKTFFDNVLSQLEQPLFTCTLKHGEPGTYDFGYIDDSKHTGEIAYTQVDNSNGWWGFTADGYSIGGGSNSSYSLYGAQHKRANGGSISGIADTGTTLMLLSDDVVGDYYQNVQGATQDQMQGGWVFPCDANLPDFILNIGGYNAVVPGKFMNFQEIDNSMCFGGLQSSGGGSTPNIFGDVFLKSQFVVWDTQGPRIGFAPQA.

Positions 1 to 20 are cleaved as a signal peptide; it reads MVLITQLGAALAVFSALTVA. Positions 21-67 are cleaved as a propeptide — activation peptide; the sequence is APTKGKARFSAPQVGIPKKAKHHPAAAYARALHKFGMKIPKAVSDAA. A Peptidase A1 domain is found at 82–400; that stretch reads YVTQVTVGGS…DTQGPRIGFA (319 aa). Residue Asp-98 is part of the active site. Asn-270 carries an N-linked (GlcNAc...) asparagine glycan. The active site involves Asp-293. Cys-329 and Cys-362 are oxidised to a cystine.

Belongs to the peptidase A1 family. Monomer.

The protein localises to the secreted. In terms of biological role, secreted aspartic endopeptidase that allows assimilation of proteinaceous substrates. The scissile peptide bond is attacked by a nucleophilic water molecule activated by two aspartic residues in the active site. Shows a broad primary substrate specificity. Favors hydrophobic residues at the P1 and P1' positions. The sequence is that of Aspartic protease pepA from Arthroderma gypseum (strain ATCC MYA-4604 / CBS 118893) (Microsporum gypseum).